The sequence spans 553 residues: CTP synthase (553 aa).

The amidoligase domain stretch occupies residues 1–277 (MPTEPETDYD…DQYVMEELDI (277 aa)). Serine 26 serves as a coordination point for CTP. A UTP-binding site is contributed by serine 26. ATP-binding positions include 27 to 32 (GLGKGI) and aspartate 84. 2 residues coordinate Mg(2+): aspartate 84 and glutamate 152. Residues 159 to 161 (DIE), 198 to 203 (KTKPTQ), and lysine 234 contribute to the CTP site. Residues 198-203 (KTKPTQ) and lysine 234 contribute to the UTP site. Residue valine 252 participates in ATP binding. The 238-residue stretch at 307–544 (LVGKYDLEDA…LEAVLGDDPH (238 aa)) folds into the Glutamine amidotransferase type-1 domain. Glycine 364 lines the L-glutamine pocket. The active-site Nucleophile; for glutamine hydrolysis is cysteine 391. L-glutamine contacts are provided by residues 392–395 (LGFQ), glutamate 415, and arginine 472. Active-site residues include histidine 517 and glutamate 519.

The protein belongs to the CTP synthase family. In terms of assembly, homotetramer.

It localises to the cytoplasm. The catalysed reaction is UTP + L-glutamine + ATP + H2O = CTP + L-glutamate + ADP + phosphate + 2 H(+). It catalyses the reaction L-glutamine + H2O = L-glutamate + NH4(+). The enzyme catalyses UTP + NH4(+) + ATP = CTP + ADP + phosphate + 2 H(+). It participates in pyrimidine metabolism; CTP biosynthesis via de novo pathway; CTP from UDP: step 2/2. Allosterically activated by GTP, when glutamine is the substrate; GTP has no effect on the reaction when ammonia is the substrate. The allosteric effector GTP functions by stabilizing the protein conformation that binds the tetrahedral intermediate(s) formed during glutamine hydrolysis. Inhibited by the product CTP, via allosteric rather than competitive inhibition. Inhibited by 6-diazo-5-oxo-l-norleucine (DON). In terms of biological role, catalyzes the ATP-dependent amination of UTP to CTP with either L-glutamine or ammonia as the source of nitrogen. Regulates intracellular CTP levels through interactions with the four ribonucleotide triphosphates. This is CTP synthase from Haloarcula hispanica (strain ATCC 33960 / DSM 4426 / JCM 8911 / NBRC 102182 / NCIMB 2187 / VKM B-1755).